A 382-amino-acid chain; its full sequence is Protein arginine N-methyltransferase 2 (382 aa).

ANK repeat units follow at residues 22 to 46 (AAQT…FQDD) and 48 to 80 (LGWS…AVDK). Residues 134–382 (KTSAGDNLVF…RLPIAKMSLI (249 aa)) enclose the RMT2 domain. S-adenosyl-L-methionine-binding positions include phenylalanine 143, methionine 177, 205 to 210 (FGLGIV), 228 to 230 (EAH), 255 to 256 (WQ), and aspartate 284.

The protein belongs to the class I-like SAM-binding methyltransferase superfamily. RMT2 methyltransferase family. In terms of assembly, monomer.

Its subcellular location is the cytoplasm. It localises to the nucleus. Its function is as follows. S-adenosyl-L-methionine-dependent protein-arginine N-methyltransferase that methylates the delta-nitrogen atom of arginine residues to form N5-methylarginine (type IV) in target proteins. Monomethylates ribosomal protein L12. The chain is Protein arginine N-methyltransferase 2 from Cryptococcus neoformans var. neoformans serotype D (strain JEC21 / ATCC MYA-565) (Filobasidiella neoformans).